Consider the following 596-residue polypeptide: Nucleotidyltransferase lcsQ (596 aa).

A mitochondrion-targeting transit peptide spans Met-1–Asn-22. A disordered region spans residues Ile-475–Asp-504.

This sequence belongs to the tRNA nucleotidyltransferase/poly(A) polymerase family.

Its subcellular location is the mitochondrion. Nucleotidyltransferase; part of the gene cluster that mediates the biosynthesis of the lipopeptide antibiotics leucinostatins that show extensive biological activities, including antimalarial, antiviral, antibacterial, antifungal, and antitumor activities, as well as phytotoxic. The function of lcsQ within the leucinostatins biosynthesis has not been identified yet. This Purpureocillium lilacinum (Paecilomyces lilacinus) protein is Nucleotidyltransferase lcsQ.